The sequence spans 296 residues: Glucokinase (296 aa).

Belongs to the ROK (NagC/XylR) family. As to quaternary structure, homodimer. A divalent metal cation serves as cofactor.

It catalyses the reaction D-glucose + ATP = D-glucose 6-phosphate + ADP + H(+). Functionally, catalyzes the phosphorylation of D-glucose to D-glucose 6-phosphate using ATP as the phosphate donor. Has a broad hexose specificity, and in addition to glucose, which shows the highest catalytic efficiency, it can also phosphorylate fructose, mannose, galactose and sorbitol. Can also use CTP, GTP or UTP as phosphoryl donor. The protein is Glucokinase of Pyrobaculum calidifontis (strain DSM 21063 / JCM 11548 / VA1).